A 239-amino-acid chain; its full sequence is Norbelladine 4'-O-methyltransferase (239 aa).

S-adenosyl-L-methionine-binding positions include V55, E77, 79–80, S85, D103, and A132; that span reads GV. D155 serves as a coordination point for a divalent metal cation. Residue D157 participates in S-adenosyl-L-methionine binding. Residues D181 and N182 each contribute to the a divalent metal cation site.

This sequence belongs to the class I-like SAM-binding methyltransferase superfamily. Cation-dependent O-methyltransferase family. Mg(2+) serves as cofactor. As to expression, highly expressed in bulbs. Detected in leaves and inflorescences.

The enzyme catalyses norbelladine + S-adenosyl-L-methionine = 4'-O-methylnorbelladine + S-adenosyl-L-homocysteine + H(+). It participates in alkaloid biosynthesis. Its function is as follows. 4'-O-methyltransferase converting norbelladine to 4'-O-methylnorbelladine. 4'-O-methylnorbelladine is a precursor to all Amaryllidaceae alkaloids such as galanthamine, lycorine and haemanthamine, and including haemanthamine- and crinamine-type alkaloids, promising anticancer agents. Can use norbelladine, N-methylnorbelladine and dopamine as substrate, but not caffeic acid, vanillin, 3,4-dihydroxybenzaldehyde and tyramine. This chain is Norbelladine 4'-O-methyltransferase, found in Narcissus aff. pseudonarcissus MK-2014 (Daffodil).